The sequence spans 418 residues: MALPSKAALVGLANTLSEQVKRYLATAGETKSPEDHKLCIESERTPSSNEHAQAWEIVRTCDRIGSLVHGPVPWLLSNALSHLDSACLAAATHLNLQDIIVDGPSPTSLDTIVAATGVSEDLLRRILRGCAQRFIFEEVAPDQYAHTDASKMLRVTGIHALVGFSCDEVMRSGASFSDFLQQTKGKPPSWNVPSPFSLAFDPTKGLFDYYSTVDEVRGRRFDLGMGGTEATKPLVEEMFDFSSLPEGSTVVDVGGGRGHLSRRVSQKHPHLRFIVQDLPAVIHGVEDTDKVTMMEHDIRRPNPVRGADVYLLRSILHDYPDAACVEILSNIVTAMDPSKSRILLDEMIMPDLLAQDSQRFMNQIDMTVVLTLNGKERSTKEWNSLITTVDGRLETEKIWWRKGEEGSHWGVQQLRLRK.

Positions 1 to 41 are excised as a propeptide; it reads MALPSKAALVGLANTLSEQVKRYLATAGETKSPEDHKLCIE. 170-176 lines the substrate pocket; it reads MRSGASF. The segment at 206 to 225 is substrate binding; the sequence is LFDYYSTVDEVRGRRFDLGM. S-adenosyl-L-methionine contacts are provided by residues 254 to 255, D277, 297 to 298, and R313; these read GG and DI. Residue H317 is the Proton acceptor of the active site.

The protein belongs to the class I-like SAM-binding methyltransferase superfamily. Cation-independent O-methyltransferase family. COMT subfamily.

The protein resides in the cytoplasm. It is found in the vacuole. It carries out the reaction sterigmatocystin + S-adenosyl-L-methionine = 8-O-methylsterigmatocystin + S-adenosyl-L-homocysteine + H(+). It catalyses the reaction dihydrosterigmatocystin + S-adenosyl-L-methionine = 8-O-methyldihydrosterigmatocystin + S-adenosyl-L-homocysteine + H(+). It functions in the pathway mycotoxin biosynthesis; aflatoxin biosynthesis. Functionally, sterigmatocystin 8-O-methyltransferase; part of the gene cluster that mediates the biosynthesis of aflatoxins, a group of polyketide-derived furanocoumarins, and part of the most toxic and carcinogenic compounds among the known mycotoxins. The four major aflatoxins produced by A.parasiticus are aflatoxin B1 (AFB1), aflatoxin B2 (AFB2), aflatoxin G1 (AFG1) and aflatoxin G2 (AFG2). Within the aflatoxin pathway, the O-methyltransferase aflP uses both sterigmatocystin (ST) and dihydrosterigmatocystin (DHST) as substrates to yield O-methylsterigmatocystin (OMST) and dihydro-O-methylsterigmatocystin (DHOMST), respectively. The biosynthesis of aflatoxins begins with the norsolorinic acid synthase aflC that combines a hexanoyl starter unit produced by the fatty acid synthase aflA/aflB and 7 malonyl-CoA extender units to synthesize the precursor NOR. The second step is the conversion of NOR to averantin and requires the norsolorinic acid ketoreductase aflD, which catalyzes the dehydration of norsolorinic acid to form (1'S)-averantin. The norsolorinic acid reductases aflE and aflF may also play a role in the conversion of NOR to AVN. The cytochrome P450 monooxygenase aflG then catalyzes the hydroxylation of AVN to 5'hydroxyaverantin (HAVN). The next step is performed by the 5'-hydroxyaverantin dehydrogenase aflH that transforms HAVN to 5'-oxoaverantin (OAVN) which is further converted to averufin (AVF) by aflK that plays a dual role in the pathway, as a 5'-oxoaverantin cyclase that mediates conversion of 5'-oxoaverantin, as well as a versicolorin B synthase in a later step in the pathway. The averufin oxidase aflI catalyzes the conversion of AVF to versiconal hemiacetal acetate (VHA). VHA is then the substrate for the versiconal hemiacetal acetate esterase aflJ to yield versiconal (VAL). Versicolorin B synthase aflK then converts VAL to versicolorin B (VERB) by closing the bisfuran ring of aflatoxin which is required for DNA-binding, thus giving to aflatoxin its activity as a mutagen. Then, the activity of the versicolorin B desaturase aflL leads to versicolorin A (VERA). A branch point starts from VERB since it can also be converted to dihydrodemethylsterigmatocystin (DMDHST), probably also by aflL, VERA being a precursor for aflatoxins B1 and G1, and DMDHST for aflatoxins B2 and G2. Next, the versicolorin reductase aflM and the cytochrome P450 monooxygenase aflN are involved in conversion of VERA to demethylsterigmatocystin (DMST). AflX and aflY seem also involved in this step, through probable aflX-mediated epoxide ring-opening step following versicolorin A oxidation and aflY-mediated Baeyer-Villiger oxidation required for the formation of the xanthone ring. The methyltransferase aflO then leads to the modification of DMST to sterigmatocystin (ST), and of DMDHST to dihydrosterigmatocystin (DHST). Both ST and DHST are then substrates of the O-methyltransferase aflP to yield O-methylsterigmatocystin (OMST) and dihydro-O-methylsterigmatocystin (DHOMST), respectively. Finally OMST is converted to aflatoxins B1 and G1, and DHOMST to aflatoxins B2 and G2, via the action of several enzymes including O-methylsterigmatocystin oxidoreductase aflQ, the cytochrome P450 monooxygenase aflU, but also the NADH-dependent flavin oxidoreductase nadA which is specifically required for the synthesis of AFG1. The polypeptide is Sterigmatocystin 8-O-methyltransferase (Aspergillus parasiticus (strain ATCC 56775 / NRRL 5862 / SRRC 143 / SU-1)).